A 345-amino-acid polypeptide reads, in one-letter code: NADPH dehydrogenase (345 aa).

Position 23-26 (23-26) interacts with FMN; that stretch reads SPMC. Tyr-28 lines the substrate pocket. Positions 60 and 102 each coordinate FMN. 164-167 lines the substrate pocket; it reads HGAH. FMN-binding positions include Arg-215 and 307–308; that span reads GR.

The protein belongs to the NADH:flavin oxidoreductase/NADH oxidase family. NamA subfamily. Homotetramer. FMN serves as cofactor.

It catalyses the reaction A + NADPH + H(+) = AH2 + NADP(+). Catalyzes the reduction of the double bond of an array of alpha,beta-unsaturated aldehydes and ketones. It also reduces the nitro group of nitroester and nitroaromatic compounds. It could have a role in detoxification processes. This Bacillus cereus (strain ZK / E33L) protein is NADPH dehydrogenase.